We begin with the raw amino-acid sequence, 196 residues long: Translation initiation factor IF-3 (196 aa).

This sequence belongs to the IF-3 family. As to quaternary structure, monomer.

It localises to the cytoplasm. Functionally, IF-3 binds to the 30S ribosomal subunit and shifts the equilibrium between 70S ribosomes and their 50S and 30S subunits in favor of the free subunits, thus enhancing the availability of 30S subunits on which protein synthesis initiation begins. This chain is Translation initiation factor IF-3, found in Wigglesworthia glossinidia brevipalpis.